The primary structure comprises 247 residues: Large ribosomal subunit protein uL3 (247 aa).

Disordered regions lie at residues 124 to 145 and 218 to 247; these read RLGQ…PGSM and VGQE…ASAE. Positions 222–241 are enriched in basic and acidic residues; the sequence is VKAEAKDTASTEKKQAETKN.

The protein belongs to the universal ribosomal protein uL3 family. As to quaternary structure, part of the 50S ribosomal subunit. Forms a cluster with proteins L14 and L19.

Functionally, one of the primary rRNA binding proteins, it binds directly near the 3'-end of the 23S rRNA, where it nucleates assembly of the 50S subunit. This Oenococcus oeni (strain ATCC BAA-331 / PSU-1) protein is Large ribosomal subunit protein uL3.